We begin with the raw amino-acid sequence, 55 residues long: Large ribosomal subunit protein bL33 (55 aa).

Belongs to the bacterial ribosomal protein bL33 family.

The protein is Large ribosomal subunit protein bL33 of Rhodopseudomonas palustris (strain BisB5).